The following is a 447-amino-acid chain: NAC domain containing protein 50 (447 aa).

A disordered region spans residues 1-21 (MGRESLAVVSSPPSATAPSTA). Positions 27 to 178 (LAPGFRFHPT…AYVLCRVFHK (152 aa)) constitute an NAC domain. Residues 126 to 184 (LGMKKTLVFHSGRAPDGLRTNWVMHEYRLVEYETETNGSLLQDAYVLCRVFHKNNIGPP) mediate DNA binding. Disordered regions lie at residues 246–303 (DATP…NKEA) and 371–392 (KENQQKEETSPPSPIASPEEKV). The span at 281–293 (TLKREHAEEDERP) shows a compositional bias: basic and acidic residues. A coiled-coil region spans residues 392–447 (VNDLQKEVHQMSVERETFKLEMMSAEAMISILQSRIDALRQENEELKKKNASGQAS).

As to quaternary structure, interacts with JMJ14 and NAC052. As to expression, mostly expressed in floral organs, and, at low levels, in other organs.

It is found in the nucleus. Its function is as follows. Transcriptional repressor that binds to the motif 5'-(C/T)A(C/A)G-3' in the promoter of target genes. Also binds to the 5'-CTTGNNNNNCAAG-3' consensus sequence in chromatin. Can bind to the mitochondrial dysfunction motif (MDM) present in the upstream regions of mitochondrial dysfunction stimulon (MDS) genes involved in mitochondrial retrograde regulation (MRR). Together with NAC051/NAC052 and JMJ14, regulates gene expression and flowering time by associating with the histone demethylase JMJ14, probably by the promotion of RNA-mediated gene silencing. The sequence is that of NAC domain containing protein 50 from Arabidopsis thaliana (Mouse-ear cress).